The primary structure comprises 216 residues: uncharacterized protein (216 aa).

Residues 5 to 22 (LGLVFGSVILIYLISLFL) traverse the membrane as a helical segment.

The protein localises to the membrane. This is an uncharacterized protein from Aquifex aeolicus (strain VF5).